A 965-amino-acid chain; its full sequence is Transmembrane channel-like protein 5 (965 aa).

Composition is skewed to polar residues over residues 1–10 (MSSFHKNSSY) and 20–31 (SGSQNHTQNYLR). The segment at 1–235 (MSSFHKNSSY…GAEEGDVYSP (235 aa)) is disordered. Over 1–417 (MSSFHKNSSY…YFSFLRWLLK (417 aa)) the chain is Extracellular. Residues 61–70 (TNPDYHHSLA) show a composition bias toward basic and acidic residues. Over residues 166-181 (QGNSYHSGPRSHSNLP) the composition is skewed to polar residues. S248 is subject to Phosphoserine. A helical membrane pass occupies residues 418 to 438 (FNIFSFVMNFSFIIIPQFTVG). Residues 439–444 (EKNTLQ) are Cytoplasmic-facing. Residues 445–467 (FTGLEFFTGAGYFRETVMYYGFY) traverse the membrane as a helical segment. At 468–484 (TNSTIRHRMGGASYNMQ) the chain is on the extracellular side. The chain crosses the membrane as a helical span at residues 485 to 505 (LAYIFTIGACLVICFFSLLFS). Residues 506-578 (MAKYFRNNFI…NQKLTRFSVH (73 aa)) lie on the Cytoplasmic side of the membrane. A helical membrane pass occupies residues 579-599 (VAAWLVSTGITAACCVAVYYL). At 600–613 (AEYNSEFLKTHKNP) the chain is on the extracellular side. The helical transmembrane segment at 614-634 (GAVLLLPFVVSCINLAVPRFY) threads the bilayer. The Cytoplasmic segment spans residues 635–657 (SMFRLVERYEIPRQEVYVLLIRN). Residues 658 to 678 (IFLKISIVGILCYYWLNIVAL) form a helical membrane-spanning segment. Residues 679–691 (SGEECWETLIGQD) lie on the Extracellular side of the membrane. The helical transmembrane segment at 692–712 (IYRLLLMDFVFSLADSLLGEF) threads the bilayer. Residues 713–747 (LRRLIGMKFITSLSLQEFDIARNVLELIYAQTLAW) lie on the Cytoplasmic side of the membrane. Residues 748-768 (LGIFFCPLLPFIQMITLFIMF) form a helical membrane-spanning segment. Residues 769 to 794 (YVKNVSLMMNFQPPSKAWRASQMITF) are Extracellular-facing. A helical transmembrane segment spans residues 795-815 (FIFLLFFPSFTGVLCTLAITI). Residues 816–859 (WRLKPSADCGPFRGLPSFIQSIYSWIDTLSHRPGYLWVVWIYQN) lie on the Cytoplasmic side of the membrane. The chain crosses the membrane as a helical span at residues 860–880 (LIGSVHFFFILTLIVLIITYL). Topologically, residues 881-965 (YWQITEGRKV…RSMQEENAIA (85 aa)) are extracellular.

It belongs to the TMC family.

The protein resides in the membrane. Probable component of an ion channel. Molecular function hasn't been characterized yet. In Rattus norvegicus (Rat), this protein is Transmembrane channel-like protein 5.